Here is a 526-residue protein sequence, read N- to C-terminus: Protein translocase subunit SecD (526 aa).

6 helical membrane passes run 8-28 (LIVF…SLLE), 356-376 (IIAL…YYSM), 379-399 (VIAC…MAIF), 405-425 (LPGM…NIII), 453-473 (AIFD…AYGT), and 478-498 (GFAL…IIGT).

The protein belongs to the SecD/SecF family. SecD subfamily. In terms of assembly, forms a complex with SecF. Part of the essential Sec protein translocation apparatus which comprises SecA, SecYEG and auxiliary proteins SecDF-YajC and YidC.

It localises to the cell inner membrane. Part of the Sec protein translocase complex. Interacts with the SecYEG preprotein conducting channel. SecDF uses the proton motive force (PMF) to complete protein translocation after the ATP-dependent function of SecA. The chain is Protein translocase subunit SecD from Helicobacter pylori (strain J99 / ATCC 700824) (Campylobacter pylori J99).